Consider the following 337-residue polypeptide: Ribosomal RNA small subunit methyltransferase H (337 aa).

Residues 33 to 35 (AGH), aspartate 53, aspartate 101, and glutamine 108 contribute to the S-adenosyl-L-methionine site.

The protein belongs to the methyltransferase superfamily. RsmH family.

Its subcellular location is the cytoplasm. The enzyme catalyses cytidine(1402) in 16S rRNA + S-adenosyl-L-methionine = N(4)-methylcytidine(1402) in 16S rRNA + S-adenosyl-L-homocysteine + H(+). Functionally, specifically methylates the N4 position of cytidine in position 1402 (C1402) of 16S rRNA. This is Ribosomal RNA small subunit methyltransferase H from Herpetosiphon aurantiacus (strain ATCC 23779 / DSM 785 / 114-95).